Reading from the N-terminus, the 442-residue chain is Septin-8 (442 aa).

Residues 1-16 are compositionally biased toward basic and acidic residues; that stretch reads MAATDLERISNAEPEP. The interval 1–21 is disordered; that stretch reads MAATDLERISNAEPEPRSLSL. An N-acetylalanine modification is found at alanine 2. Serine 10 bears the Phosphoserine mark. The Septin-type G domain occupies 41–307; that stretch reads QGFSFNILCV…ELYRRCKLEE (267 aa). Positions 51–58 are G1 motif; it reads GETGIGKS. GTP is bound by residues 51–58, glycine 106, 187–195, glycine 241, and arginine 256; these read GETGIGKS and KADTISKSE. Residues 103–106 are G3 motif; the sequence is DAVG. Residues 186–189 are G4 motif; the sequence is AKAD. The stretch at 322-407 forms a coiled coil; it reads LQETYEAKRK…FNCRKAAMEA (86 aa). Residues 411 to 420 show a composition bias toward polar residues; that stretch reads QALHATSQQP. The interval 411 to 442 is disordered; that stretch reads QALHATSQQPLRKDKDKKKVGGWSSIYSVTIP.

It belongs to the TRAFAC class TrmE-Era-EngA-EngB-Septin-like GTPase superfamily. Septin GTPase family. In terms of assembly, septins polymerize into heterooligomeric protein complexes that form filaments, and can associate with cellular membranes, actin filaments and microtubules. GTPase activity is required for filament formation. Interacts with SEPTIN7. Interacts with CDK14, SEPTIN4 and SEPTIN5. Interacts with VAMP2; the interaction inhibits interaction of VAMP2 with SYP. Interacts with STX1A. As to expression, expressed in cerebrum, hippocampus and cerebellum (at protein level). Expressed in heart (at protein level).

Its subcellular location is the cytoplasm. It localises to the cytoskeleton. The protein localises to the synapse. The protein resides in the cell projection. It is found in the axon. Its subcellular location is the cytoplasmic vesicle. It localises to the secretory vesicle. The protein localises to the synaptic vesicle membrane. The protein resides in the presynapse. Its function is as follows. Filament-forming cytoskeletal GTPase. May play a role in platelet secretion. Seems to participate in the process of SNARE complex formation in synaptic vesicles. In Rattus norvegicus (Rat), this protein is Septin-8.